We begin with the raw amino-acid sequence, 369 residues long: S-(hydroxymethyl)glutathione dehydrogenase (369 aa).

Zn(2+) is bound by residues Cys-40, His-62, Cys-92, Cys-95, Cys-98, Cys-106, and Cys-169.

Belongs to the zinc-containing alcohol dehydrogenase family. Class-III subfamily. In terms of assembly, homodimer. The cofactor is Zn(2+).

The protein resides in the cytoplasm. It carries out the reaction S-(hydroxymethyl)glutathione + NADP(+) = S-formylglutathione + NADPH + H(+). It catalyses the reaction S-(hydroxymethyl)glutathione + NAD(+) = S-formylglutathione + NADH + H(+). The enzyme catalyses a primary alcohol + NAD(+) = an aldehyde + NADH + H(+). The catalysed reaction is a secondary alcohol + NAD(+) = a ketone + NADH + H(+). It carries out the reaction S-nitrosoglutathione + NADH + H(+) = S-(hydroxysulfenamide)glutathione + NAD(+). Has high formaldehyde dehydrogenase activity in the presence of glutathione and catalyzes the oxidation of normal alcohols in a reaction that is not GSH-dependent. In addition, hemithiolacetals other than those formed from GSH, including omega-thiol fatty acids, also are substrates. Also acts as a S-nitroso-glutathione reductase by catalyzing the NADH-dependent reduction of S-nitrosoglutathione. This Escherichia coli O1:K1 / APEC protein is S-(hydroxymethyl)glutathione dehydrogenase (frmA).